The sequence spans 285 residues: Methionine aminopeptidase 2 (285 aa).

Residue H114 participates in substrate binding. A divalent metal cation is bound by residues D131, D142, and H205. H212 is a substrate binding site. Positions 238 and 269 each coordinate a divalent metal cation.

Monomer. Co(2+) serves as cofactor. The cofactor is Zn(2+). It depends on Mn(2+) as a cofactor. Requires Fe(2+) as cofactor.

The catalysed reaction is Release of N-terminal amino acids, preferentially methionine, from peptides and arylamides.. Its activity is regulated as follows. Inhibited by bengamide derivatives and by various metalloform-selective inhibitors. Removes the N-terminal methionine from nascent proteins. The N-terminal methionine is often cleaved when the second residue in the primary sequence is small and uncharged (Met-Ala-, Cys, Gly, Pro, Ser, Thr, or Val). Requires deformylation of the N(alpha)-formylated initiator methionine before it can be hydrolyzed. The sequence is that of Methionine aminopeptidase 2 from Mycobacterium tuberculosis (strain ATCC 25618 / H37Rv).